We begin with the raw amino-acid sequence, 934 residues long: AP-2 complex subunit alpha (934 aa).

Residues arginine 623–threonine 670 are disordered. The segment covering proline 636 to histidine 645 has biased composition (polar residues). Over residues serine 646–serine 663 the composition is skewed to low complexity.

It belongs to the adapter complexes large subunit family. Adaptor protein complex 2 (AP-2) is a heterotetramer composed of two large adaptins (alpha-type and beta-type subunits), a medium adaptin (mu-type subunit AP50) and a small adaptin (sigma-type subunit AP17).

It localises to the cell membrane. It is found in the membrane. The protein localises to the coated pit. Adaptins are components of the adapter complexes which link clathrin to receptors in coated vesicles. Clathrin-associated protein complexes are believed to interact with the cytoplasmic tails of membrane proteins, leading to their selection and concentration. Alpha adaptin is a subunit of the plasma membrane adapter. This is AP-2 complex subunit alpha from Anopheles gambiae (African malaria mosquito).